Here is a 144-residue protein sequence, read N- to C-terminus: Large ribosomal subunit protein uL16 (144 aa).

Belongs to the universal ribosomal protein uL16 family. In terms of assembly, part of the 50S ribosomal subunit.

Binds 23S rRNA and is also seen to make contacts with the A and possibly P site tRNAs. The protein is Large ribosomal subunit protein uL16 of Bacillus licheniformis (strain ATCC 14580 / DSM 13 / JCM 2505 / CCUG 7422 / NBRC 12200 / NCIMB 9375 / NCTC 10341 / NRRL NRS-1264 / Gibson 46).